We begin with the raw amino-acid sequence, 346 residues long: 4-amino-5-hydroxymethyl-2-methylpyrimidine phosphate synthase (346 aa).

Lys-62 is modified (N6-(pyridoxal phosphate)lysine). Residue His-66 is part of the active site. Gly-114–Gly-117 contacts pyridoxal 5'-phosphate. The CCCFC; essential for catalytic activity, may be the site of iron coordination motif lies at Cys-194–Cys-198.

The protein belongs to the NMT1/THI5 family. In terms of assembly, homodimer. Fe cation serves as cofactor.

It is found in the cytoplasm. The protein localises to the nucleus. The catalysed reaction is N(6)-(pyridoxal phosphate)-L-lysyl-[4-amino-5-hydroxymethyl-2-methylpyrimidine phosphate synthase] + L-histidyl-[4-amino-5-hydroxymethyl-2-methylpyrimidine phosphate synthase] + 2 Fe(3+) + 4 H2O = L-lysyl-[4-amino-5-hydroxymethyl-2-methylpyrimidine phosphate synthase] + (2S)-2-amino-5-hydroxy-4-oxopentanoyl-[4-amino-5-hydroxymethyl-2-methylpyrimidine phosphate synthase] + 4-amino-2-methyl-5-(phosphooxymethyl)pyrimidine + 3-oxopropanoate + 2 Fe(2+) + 2 H(+). The protein operates within cofactor biosynthesis; thiamine diphosphate biosynthesis. Its function is as follows. Responsible for the formation of the pyrimidine heterocycle in the thiamine biosynthesis pathway. Catalyzes the formation of hydroxymethylpyrimidine phosphate (HMP-P) from histidine and pyridoxal phosphate (PLP). The protein uses PLP and the active site histidine to form HMP-P, generating an inactive enzyme. The enzyme can only undergo a single turnover, which suggests it is a suicide enzyme. This chain is 4-amino-5-hydroxymethyl-2-methylpyrimidine phosphate synthase, found in Schizosaccharomyces pombe (strain 972 / ATCC 24843) (Fission yeast).